The primary structure comprises 777 residues: MDADSDWRSAPFRQKLVSQIDEAMRKAGVAHTKSSKDMESHVFLKAKTREEYLSLVARLIIHFRDILNKKSQAAATDPMNALQNLTGTAVVGGQGMGMGVRPQGAQMGAMSGMAQMAQQMNLPGQPQPGASGMAPHGITGVAAGNQATQLQLQQIAQHQQQQFQQQQQQAALQHQQQQFQVAQQQQFQVVAVAAAQQQQQQQQQQQQQQQQVQQQQQQLQAAAQQQHILKLQLQQQQNQQQQLQQQQQQQLQRIAHLQQMQQMQQQQQQQQQQQQQQQQQPPPQQVMQLQQMQQQQVAQSQQQQLLSTQPQAPSLVAQGQIPSQVMPVTLTPQQQQQLKILQQVRAQQQQQAQHQAQQQAQQQAHQQAQQQAQQQAQQQAAQQQAQQAAQQAQQQAQQAAQQQAAQAHLAAGQVTQNSIPVMSSPSPVQQVQTPQPMPPPPQPSPQPSQPMSQPNSNVSSGPAPSPSSFMPSPSPQPSQSPASARTPQNFSVPSPGPLNTPGNPNSVMSPASNNQSEEQQYLDKLKQLSKYIEPLRRMINKIDKNEERKKDLSKMKSLLDILTDPNKRCPLKTLQKCEIALEKLKNDMAVPTPPPPTVPSTKQQYLCQPLLDAVLANIRSPVFNHSLYRTFMPAMTAIHGQPIASQLVVPRKRKFEEDERQSIPNVLQGEVAKLHSKFLVNLDPSHCSNNGTVYLICKLDDKNLPSVPPLQLSVPADYPDQSPLWMDNPRDYEANPFLQSVYRYMTSKLLQLPDKHSLTALLNTWAQSIRQACLSAA.

Disordered stretches follow at residues 120 to 139 (MNLP…HGIT) and 418 to 520 (SIPV…EEQQ). Over residues 420-434 (PVMSSPSPVQQVQTP) the composition is skewed to low complexity. The span at 435–448 (QPMPPPPQPSPQPS) shows a compositional bias: pro residues. Residues 449 to 471 (QPMSQPNSNVSSGPAPSPSSFMP) are compositionally biased toward low complexity. The segment covering 500–519 (TPGNPNSVMSPASNNQSEEQ) has biased composition (polar residues).

The protein belongs to the Mediator complex subunit 15 family. As to quaternary structure, component of the Mediator complex. Interacts with srebf1 and srebf2. Interacts with smad2, smad3 and smad4.

The protein resides in the cytoplasm. It is found in the nucleus. Component of the Mediator complex, a coactivator involved in the regulated transcription of nearly all RNA polymerase II-dependent genes. Mediator functions as a bridge to convey information from gene-specific regulatory proteins to the basal RNA polymerase II transcription machinery. Mediator is recruited to promoters by direct interactions with regulatory proteins and serves as a scaffold for the assembly of a functional preinitiation complex with RNA polymerase II and the general transcription factors. Required for cholesterol-dependent gene regulation. Positively regulates the Nodal signaling pathway. The chain is Mediator of RNA polymerase II transcription subunit 15 (med15) from Xenopus laevis (African clawed frog).